Reading from the N-terminus, the 64-residue chain is Large ribosomal subunit protein bL35 (64 aa).

Belongs to the bacterial ribosomal protein bL35 family.

The sequence is that of Large ribosomal subunit protein bL35 from Acinetobacter baumannii (strain AB307-0294).